The sequence spans 508 residues: Protein adenylyltransferase Fic (508 aa).

A helical transmembrane segment spans residues Phe48–Ser70. TPR repeat units follow at residues Ala132 to His165 and Pro166 to Asn200. The short motif at Ser257–Gly262 is the Inhibitory (S/T)XXXE(G/N) motif element. Residues Glu261 and Val342–His345 each bind ATP. Residues Ile311 to Asp446 enclose the Fido domain. His389 is an active-site residue. ATP contacts are provided by residues Asp393–Arg400, Tyr425–Tyr426, and Asn433.

It belongs to the fic family. As to quaternary structure, homodimer.

It localises to the membrane. The enzyme catalyses L-tyrosyl-[protein] + ATP = O-(5'-adenylyl)-L-tyrosyl-[protein] + diphosphate. The catalysed reaction is L-threonyl-[protein] + ATP = 3-O-(5'-adenylyl)-L-threonyl-[protein] + diphosphate. It catalyses the reaction 3-O-(5'-adenylyl)-L-threonyl-[protein] + H2O = L-threonyl-[protein] + AMP + H(+). Its activity is regulated as follows. The side chain of Glu-261 determines which of the two opposing activities (AMPylase or de-AMPylase) will take place. In response to endoplasmic reticulum stress, mediates de-AMPylase activity. Adenylyltransferase activity is inhibited by the inhibitory helix present at the N-terminus: Glu-261 binds ATP and competes with ATP-binding at Arg-400, thereby preventing adenylyltransferase activity. In unstressed cells, disengagement of Glu-261 promotes adenylyltransferase activity. Activation dissociates ATP-binding from Glu-261, allowing ordered binding of the entire ATP moiety with the alpha-phosphate in an orientation that is productive for accepting an incoming target hydroxyl side chain. In terms of biological role, protein that can both mediate the addition of adenosine 5'-monophosphate (AMP) to specific residues of target proteins (AMPylation), and the removal of the same modification from target proteins (de-AMPylation), depending on the context. The side chain of Glu-261 determines which of the two opposing activities (AMPylase or de-AMPylase) will take place. Acts as a key regulator of the unfolded protein response (UPR) by mediating AMPylation or de-AMPylation of Hsc70-3/BiP. In unstressed cells, acts as an adenylyltransferase by mediating AMPylation of Hsc70-3/BiP at 'Thr-518', thereby inactivating it. In response to endoplasmic reticulum stress, acts as a phosphodiesterase by mediating removal of ATP (de-AMPylation) from Hsc70-3/BiP at 'Thr-518', leading to restore HSPA5/BiP activity. This is Protein adenylyltransferase Fic from Drosophila persimilis (Fruit fly).